A 244-amino-acid polypeptide reads, in one-letter code: Uridylate kinase (244 aa).

Residue 17-20 (KLSG) coordinates ATP. Gly59 is a UMP binding site. ATP is bound by residues Gly60 and Arg64. UMP is bound by residues Asp79 and 140-147 (TGNPFFTT). Residues Thr167, Tyr173, and Asp176 each contribute to the ATP site.

Belongs to the UMP kinase family. In terms of assembly, homohexamer.

It localises to the cytoplasm. The catalysed reaction is UMP + ATP = UDP + ADP. The protein operates within pyrimidine metabolism; CTP biosynthesis via de novo pathway; UDP from UMP (UMPK route): step 1/1. Its activity is regulated as follows. Inhibited by UTP. Functionally, catalyzes the reversible phosphorylation of UMP to UDP. This is Uridylate kinase from Hahella chejuensis (strain KCTC 2396).